The chain runs to 1131 residues: Phytochrome (1131 aa).

A disordered region spans residues 1–30 (MASNSRHTQSQSTGSNNRRSSTNTNTTTNK). A compositionally biased stretch (low complexity) spans 9-29 (QSQSTGSNNRRSSTNTNTTTN). In terms of domain architecture, GAF spans 227–406 (DVGLLCDTVV…ALGLQLNMEL (180 aa)). A phytochromobilin-binding site is contributed by C332. 2 consecutive PAS domains span residues 621 to 692 (VASE…LRGE) and 755 to 826 (DYRS…TIVL). Residues 903-1123 (YIRQEIKNPL…LVNVEFPMAQ (221 aa)) form the Histidine kinase domain.

Belongs to the phytochrome family. As to quaternary structure, homodimer. Contains one covalently linked phytochromobilin chromophore.

Functionally, regulatory photoreceptor which exists in two forms that are reversibly interconvertible by light: the Pr form that absorbs maximally in the red region of the spectrum and the Pfr form that absorbs maximally in the far-red region. Photoconversion of Pr to Pfr induces an array of morphogenic responses, whereas reconversion of Pfr to Pr cancels the induction of those responses. Pfr controls the expression of a number of nuclear genes including those encoding the small subunit of ribulose-bisphosphate carboxylase, chlorophyll A/B binding protein, protochlorophyllide reductase, rRNA, etc. It also controls the expression of its own gene(s) in a negative feedback fashion. This is Phytochrome from Pinus sylvestris (Scotch pine).